We begin with the raw amino-acid sequence, 698 residues long: MRPVTDLQRRVFPFEVISDFTPSGDQPDAIAQLTARLQAGEKDIVLLGATGTGKSATTAWLIEQVQRPTLVMAPNKTLAAQLATEFRELLPNNAVEYFVSYYDYYQPEAYVPSSDTYIEKDSSINDEVERLRHSATNSLLTRRDVVVVASVSCIYGLGTPQEYVDRMVRLRVGMQIERDDLLRQFVGMQYTRNDLSFQRGTFRVRGDTVEIIPVYEELALRIEFFGDEVEAIHTLHPLTGDVVRAEEEMYLFPATHYVAGPERMERAIAGIEVELEDRLAELEGGGRLLEAQRLRMRTTYDIEMMRQIGTCSGIENYSRHIDGREPGSPPHTLLDYFPEDFMLVIDESHQTVPQIGAMYEGDSSRKRTLVEHGFRLPSAMDNRPLRWEEFLERIGQTVYLSATPGPYELGQSDGVVEQVIRPTGLVDPEIVVKPTKGQIDDLLAEINARAERDERVLVTTLTKKMSEDLTDYLLERGVRVRYLHSEVDTLRRVELLRELRTGVFDVLVGINLLREGLDLPEVSLVAILDADKEGFLRSGTSLIQTIGRAARNVSGQVHMYADSVTPSMALAIEETNRRREKQVAYNTERGIDPEPLRKRIGDITELLAREDIDTKELLAGGYRQAGSKAPVPRKAGGDGSMRERLAGAATADLAELIQELTDQMHVAAGELQFEVAARLRDEISDLKKELRQMSAASA.

Positions 35–210 constitute a Helicase ATP-binding domain; that stretch reads ARLQAGEKDI…TFRVRGDTVE (176 aa). 48 to 55 is a binding site for ATP; sequence GATGTGKS. Positions 101 to 124 match the Beta-hairpin motif; that stretch reads YYDYYQPEAYVPSSDTYIEKDSSI. Residues 438–604 form the Helicase C-terminal domain; it reads QIDDLLAEIN…PLRKRIGDIT (167 aa). In terms of domain architecture, UVR spans 654–689; it reads AELIQELTDQMHVAAGELQFEVAARLRDEISDLKKE.

This sequence belongs to the UvrB family. Forms a heterotetramer with UvrA during the search for lesions. Interacts with UvrC in an incision complex.

The protein localises to the cytoplasm. The UvrABC repair system catalyzes the recognition and processing of DNA lesions. A damage recognition complex composed of 2 UvrA and 2 UvrB subunits scans DNA for abnormalities. Upon binding of the UvrA(2)B(2) complex to a putative damaged site, the DNA wraps around one UvrB monomer. DNA wrap is dependent on ATP binding by UvrB and probably causes local melting of the DNA helix, facilitating insertion of UvrB beta-hairpin between the DNA strands. Then UvrB probes one DNA strand for the presence of a lesion. If a lesion is found the UvrA subunits dissociate and the UvrB-DNA preincision complex is formed. This complex is subsequently bound by UvrC and the second UvrB is released. If no lesion is found, the DNA wraps around the other UvrB subunit that will check the other stand for damage. This is UvrABC system protein B from Beutenbergia cavernae (strain ATCC BAA-8 / DSM 12333 / CCUG 43141 / JCM 11478 / NBRC 16432 / NCIMB 13614 / HKI 0122).